The chain runs to 943 residues: MSSNTVAEFAAELKKSPETLLDQLKSAGVVKVSPSDVLNEADKQKLLAHLQASHGTAGGDRKKITLVKKSTSEIKQADASGKARTIQVEVRKKRTFIKRDDNVDAPSDAAESAPSAEDLELVRREEEARRQAELIRRQEEELALTRREREERERREREAEERAAAYAAQQAEKKAQESAERAEAQREAAVEAEERAKAQADARAKADEESKARAAEETARAADLDERRRKALAEAEAIRAMMAAPKKVLVAKKPEEPKPAAKAGASGDAKKGTLHKPATGSGTGARAAAPSAPGGAGKEVKSAKLSSSWANDTTKKKEIKTRGDSSGGVGRNNWRGGPRGRRGNDRDDQRQQQAATEFRVLEVYVPETITVAELAHKMAIKASEVIKSLMKMGQMVTINQPLDQDTAMIVVEEMGHTAKVAALDDPEAFTAEEVSSQDAEQLSRAPVVTVMGHVDHGKTSLLDYIRRSKVASGEAGGITQHIGAYHVETPRGIVTFLDTPGHEAFTAMRARGAQATDIVILVCAADDGVMPQTKEAIKHAKAAGVPIVVALTKADKPEANIERVKQELVGEQVVPEEYGGDSPFVAVSSKTGMGIDALLEQVLLQAEVLELKAPVDAAAKGIVIETQLDKGRGSVATVLVQSGTLKVGDVVLAGQTFGRVRAMLDEDGKQTKEAGPSIPVEIQGLNEVPQAGDDFMVLQDERRAREIATYRAGKFRNTKLAKQQAAKLENMFAEMGAGEVQTLPLIIKADVQGSQEALAASLLKLSTEEIRVQIVYSGVGGISESDVNLAIASKAIVIGFNVRADAQARKTAEGNDVDIRYYNIIYDAVDEVKAAMSGMLAPEQREEAIGTAEIRTVFVASKIGTVAGSYITSGQVTRNCKFRLLRDNIVIYTGDVESVRRMKDDVKEVKEGFECGIKLKNYNDIKEGDQLEFFEIKEIARTL.

Disordered stretches follow at residues 96 to 229 (FIKR…ERRR) and 243 to 352 (AAPK…QRQQ). The segment covering 104 to 116 (DAPSDAAESAPSA) has biased composition (low complexity). Basic and acidic residues-rich tracts occupy residues 120-163 (ELVR…EERA) and 171-229 (AEKK…ERRR). A compositionally biased stretch (low complexity) spans 278–293 (ATGSGTGARAAAPSAP). Residues 313–323 (TTKKKEIKTRG) show a composition bias toward basic and acidic residues. The tr-type G domain occupies 443-612 (SRAPVVTVMG…LLQAEVLELK (170 aa)). The G1 stretch occupies residues 452 to 459 (GHVDHGKT). A GTP-binding site is contributed by 452-459 (GHVDHGKT). Residues 477–481 (GITQH) are G2. Positions 498–501 (DTPG) are G3. Residues 498–502 (DTPGH) and 552–555 (TKAD) contribute to the GTP site. The G4 stretch occupies residues 552-555 (TKAD). Residues 588-590 (SSK) form a G5 region.

This sequence belongs to the TRAFAC class translation factor GTPase superfamily. Classic translation factor GTPase family. IF-2 subfamily.

Its subcellular location is the cytoplasm. Its function is as follows. One of the essential components for the initiation of protein synthesis. Protects formylmethionyl-tRNA from spontaneous hydrolysis and promotes its binding to the 30S ribosomal subunits. Also involved in the hydrolysis of GTP during the formation of the 70S ribosomal complex. This chain is Translation initiation factor IF-2, found in Acidovorax sp. (strain JS42).